Consider the following 298-residue polypeptide: ATP phosphoribosyltransferase (298 aa).

This sequence belongs to the ATP phosphoribosyltransferase family. Long subfamily. Mg(2+) is required as a cofactor.

The protein resides in the cytoplasm. The enzyme catalyses 1-(5-phospho-beta-D-ribosyl)-ATP + diphosphate = 5-phospho-alpha-D-ribose 1-diphosphate + ATP. The protein operates within amino-acid biosynthesis; L-histidine biosynthesis; L-histidine from 5-phospho-alpha-D-ribose 1-diphosphate: step 1/9. With respect to regulation, feedback inhibited by histidine. Catalyzes the condensation of ATP and 5-phosphoribose 1-diphosphate to form N'-(5'-phosphoribosyl)-ATP (PR-ATP). Has a crucial role in the pathway because the rate of histidine biosynthesis seems to be controlled primarily by regulation of HisG enzymatic activity. The chain is ATP phosphoribosyltransferase from Vibrio vulnificus (strain CMCP6).